The following is a 241-amino-acid chain: ATP synthase subunit a (241 aa).

The next 5 helical transmembrane spans lie at 30 to 50 (GQVF…VVIG), 91 to 111 (FIGT…LVPW), 128 to 148 (INTT…AGLS), 193 to 213 (LVVA…VMFL), and 214 to 234 (GLFT…YYIG).

This sequence belongs to the ATPase A chain family. In terms of assembly, F-type ATPases have 2 components, CF(1) - the catalytic core - and CF(0) - the membrane proton channel. CF(1) has five subunits: alpha(3), beta(3), gamma(1), delta(1), epsilon(1). CF(0) has four main subunits: a, b, b' and c.

The protein localises to the cellular thylakoid membrane. Functionally, key component of the proton channel; it plays a direct role in the translocation of protons across the membrane. The sequence is that of ATP synthase subunit a from Prochlorococcus marinus (strain NATL1A).